We begin with the raw amino-acid sequence, 414 residues long: Ferredoxin--NAD(P)(+) reductase fdr (414 aa).

7-38 lines the FAD pocket; it reads DVVIVGAGHGGAQTAIALRQNGFAGTIAIIGA. 149–177 lines the NAD(+) pocket; the sequence is KVVIIGGGYIGLEAAAVMAKFGKNVTLIE.

The protein belongs to the FAD-dependent oxidoreductase family. In terms of assembly, monomer. Carbazole 1,9a-dioxygenase complex consists of a terminal oxygenase component CarAa, a ferredoxin reductase component fdr and a ferredoxin component CarAc. FAD is required as a cofactor.

The enzyme catalyses 2 reduced [2Fe-2S]-[ferredoxin] + NAD(+) + H(+) = 2 oxidized [2Fe-2S]-[ferredoxin] + NADH. It carries out the reaction 2 reduced [2Fe-2S]-[ferredoxin] + NADP(+) + H(+) = 2 oxidized [2Fe-2S]-[ferredoxin] + NADPH. In terms of biological role, part of the multicomponent carbazole 1,9a-dioxygenase (CARDO), that converts carbazole (CAR) into 2-aminobiphenyl-2,3-diol. The sequence is that of Ferredoxin--NAD(P)(+) reductase fdr (fdr) from Sphingomonas sp.